A 603-amino-acid chain; its full sequence is Glutathione-regulated potassium-efflux system protein KefB (603 aa).

13 helical membrane-spanning segments follow: residues 4-24 (SDFL…VPLA), 29-49 (IGAV…GLGF), 55-75 (EILH…GLEL), 87-107 (IFGV…GLLM), 115-135 (AAVV…LQLM), 152-172 (VLLF…LLAG), 177-197 (HFDW…LIGG), 207-227 (FIAA…LVLG), 230-250 (LFMD…GVLL), 268-288 (GLLL…GVLY), 291-311 (LLWV…VLYL), 324-344 (MQFA…FSTA), and 355-375 (MALL…PLLM). The 120-residue stretch at 402 to 521 (KPQVIVVGFG…AGVTQFSRET (120 aa)) folds into the RCK N-terminal domain.

This sequence belongs to the monovalent cation:proton antiporter 2 (CPA2) transporter (TC 2.A.37) family. KefB subfamily. Interacts with the regulatory subunit KefG.

It is found in the cell inner membrane. In terms of biological role, pore-forming subunit of a potassium efflux system that confers protection against electrophiles. Catalyzes K(+)/H(+) antiport. The sequence is that of Glutathione-regulated potassium-efflux system protein KefB from Shigella boydii serotype 4 (strain Sb227).